The chain runs to 552 residues: Glutamine-dependent NAD(+) synthetase (552 aa).

The region spanning 11-253 (LRIAMAQFDF…DQWLVVDYAA (243 aa)) is the CN hydrolase domain. Catalysis depends on Glu52, which acts as the Proton acceptor; for glutaminase activity. The For glutaminase activity role is filled by Lys119. Tyr125 provides a ligand contact to L-glutamine. Cys157 (nucleophile; for glutaminase activity) is an active-site residue. Residues Ser183 and Lys189 each contribute to the L-glutamine site. Residues 275-552 (AWRAVVRGLK…YPITNGYSGQ (278 aa)) are ligase. ATP is bound at residue 298–305 (GLSGGIDS). Deamido-NAD(+) is bound at residue Asn381. Thr405 contacts ATP. Glu410 and Lys522 together coordinate deamido-NAD(+).

This sequence in the C-terminal section; belongs to the NAD synthetase family.

The catalysed reaction is deamido-NAD(+) + L-glutamine + ATP + H2O = L-glutamate + AMP + diphosphate + NAD(+) + H(+). It functions in the pathway cofactor biosynthesis; NAD(+) biosynthesis; NAD(+) from deamido-NAD(+) (L-Gln route): step 1/1. Catalyzes the ATP-dependent amidation of deamido-NAD to form NAD. Uses L-glutamine as a nitrogen source. In Xanthomonas campestris pv. campestris (strain 8004), this protein is Glutamine-dependent NAD(+) synthetase.